Reading from the N-terminus, the 262-residue chain is Sugar fermentation stimulation protein homolog (262 aa).

It belongs to the SfsA family.

The polypeptide is Sugar fermentation stimulation protein homolog (Lawsonia intracellularis (strain PHE/MN1-00)).